Reading from the N-terminus, the 306-residue chain is Glutathione transport system permease protein GsiC (306 aa).

Topologically, residues 1–8 (MLNYVLKR) are cytoplasmic. Residues 9–29 (LLGLIPTLLIVAVLVFLFVHL) form a helical membrane-spanning segment. Topologically, residues 30-102 (LPGDPARLIA…SRFLPTLWLT (73 aa)) are periplasmic. The region spanning 95–292 (FLPTLWLTIT…LEFILINLVV (198 aa)) is the ABC transmembrane type-1 domain. A helical membrane pass occupies residues 103-123 (ITSMIWAVLFGMAIGIAAAVW). The Cytoplasmic portion of the chain corresponds to 124–134 (RNRWPDRLGMT). A helical transmembrane segment spans residues 135-155 (LAVTGISFPAFALGMLLMQIF). Residues 156–168 (SVDLGWLPTVGAD) lie on the Periplasmic side of the membrane. The helical transmembrane segment at 169 to 189 (SWQHYILPSLTLGAAVASVMA) threads the bilayer. At 190-228 (RFTRSSFVDVLSEDYMRTARAKGVSETWVVLKHGLRNAM) the chain is on the cytoplasmic side. The chain crosses the membrane as a helical span at residues 229-249 (IPVVTMMGLQFGFLLGGSIVV). Residues 250-278 (EKVFNWPGLGRLLVDSVDMRDYPVIQAEV) are Periplasmic-facing. A helical transmembrane segment spans residues 279-299 (LLFSLEFILINLVVDVLYAAI). Over 300 to 306 (NPAIRYK) the chain is Cytoplasmic.

The protein belongs to the binding-protein-dependent transport system permease family. The complex is composed of two ATP-binding proteins (GsiA), two transmembrane proteins (GsiC and GsiD) and a solute-binding protein (GsiB).

It is found in the cell inner membrane. Its function is as follows. Part of the ABC transporter complex GsiABCD involved in glutathione import. Probably responsible for the translocation of the substrate across the membrane. This chain is Glutathione transport system permease protein GsiC, found in Salmonella typhimurium (strain LT2 / SGSC1412 / ATCC 700720).